We begin with the raw amino-acid sequence, 328 residues long: MKKTVLSGVQATGSLHLGNYLGSIRNWVKMQEEYNCFFFLADLHSITVDIAPSELKRSVIETLAIYLAAGLDPNKVTIFAQSMVKEHAELAWLLNCVTPLGWLKRMTQFKDKAGKDQEKACLGLFSYPVLMAADILIYKADIVPVGEDQKQHLELTRDIAGVINRKFNKEILKVPEVLIGGSGTRIMSLRDGSKKMSKSDSSDFSRINLRDDNDLIHQKIKKAKTDHLSFVSYDKEARPEISNLLDIYTTLSEEKLENIIQNYEGFAKFKEDLAEIIITNLQPMRDKYLELMNDQEYLLKILHQGAEKARVRASETVNELKEQFGFVI.

ATP is bound by residues 10–12 (QAT) and 18–19 (GN). The short motif at 11–19 (ATGSLHLGN) is the 'HIGH' region element. D134 provides a ligand contact to L-tryptophan. Residues 146 to 148 (GED), I186, and 195 to 199 (KMSKS) each bind ATP. The short motif at 195–199 (KMSKS) is the 'KMSKS' region element.

Belongs to the class-I aminoacyl-tRNA synthetase family. Homodimer.

The protein resides in the cytoplasm. It catalyses the reaction tRNA(Trp) + L-tryptophan + ATP = L-tryptophyl-tRNA(Trp) + AMP + diphosphate + H(+). In terms of biological role, catalyzes the attachment of tryptophan to tRNA(Trp). In Rickettsia bellii (strain RML369-C), this protein is Tryptophan--tRNA ligase.